The primary structure comprises 453 residues: Vacuolar cation/proton exchanger 1b (453 aa).

Over 1–67 the chain is Cytoplasmic; the sequence is MPVSRMMMES…LRSLLANLND (67 aa). A helical transmembrane segment spans residues 68 to 85; it reads VLLTTRLFLLFPAVLLAI. Over 86–91 the chain is Extracellular; the sequence is AATYLH. The chain crosses the membrane as a helical span at residues 92–109; it reads FGQVWVFVLSLIGLVPLA. Topologically, residues 110-126 are cytoplasmic; the sequence is ERLSFLTEQIAFYTGPT. A helical membrane pass occupies residues 127-147; the sequence is VGGLLNATFGNVTEVIIALLA. The interval 136 to 171 is cation selection; sequence GNVTEVIIALLALREGKIEVVKCSLLGSILSNLLLV. Residues 148-160 lie on the Extracellular side of the membrane; it reads LREGKIEVVKCSL. The helical transmembrane segment at 161 to 181 threads the bilayer; it reads LGSILSNLLLVLGTSLFLAGI. Residues 182–194 lie on the Cytoplasmic side of the membrane; the sequence is ANLRAHQPYDTKQ. Residues 195 to 215 traverse the membrane as a helical segment; sequence AHVNTALLMLAVLCHSLPLML. Over 216-232 the chain is Extracellular; sequence RYAVTSGDHAIVSGDAA. Residues 233 to 253 traverse the membrane as a helical segment; sequence LHLSRACSILMLIAYLAYLFF. Topologically, residues 254–283 are cytoplasmic; the sequence is QLNTHRQLFEPQQVEDDDDDDLVIAQDDEP. Residues 284–304 traverse the membrane as a helical segment; the sequence is VLGFSSAMIWLALMTLLTALL. Residues 305–327 are Extracellular-facing; that stretch reads SGYVVSTIEAASESWELSVSFIS. The helical transmembrane segment at 328 to 348 threads the bilayer; the sequence is IILLPIVGNAAEHAGAVIFAL. The cation selection stretch occupies residues 335–370; the sequence is GNAAEHAGAVIFALKNKMDITLGVSLGSATQISMFV. At 349-364 the chain is on the cytoplasmic side; sequence KNKMDITLGVSLGSAT. The helical transmembrane segment at 365–385 threads the bilayer; sequence QISMFVVPVSVIVAWTMGIPM. At 386–388 the chain is on the extracellular side; that stretch reads DLD. The helical transmembrane segment at 389–409 threads the bilayer; it reads FNLLETGSLFLAILVTAFTLQ. The Cytoplasmic segment spans residues 410–414; it reads EGESH. Residues 415–435 traverse the membrane as a helical segment; the sequence is YLKGLILVLCYAVISVCFFVI. The Extracellular portion of the chain corresponds to 436-453; that stretch reads RRRSAGGTDGVHHLDVIV.

Belongs to the Ca(2+):cation antiporter (CaCA) (TC 2.A.19) family. Cation/proton exchanger (CAX) subfamily. As to expression, expressed in embryo and roots.

Its subcellular location is the vacuole membrane. Functionally, vacuolar cation/proton exchanger (CAX). Translocates Ca(2+) and other metal ions into vacuoles using the proton gradient formed by H(+)-ATPase and H(+)-pyrophosphatase. The sequence is that of Vacuolar cation/proton exchanger 1b (CAX1b) from Oryza sativa subsp. japonica (Rice).